The sequence spans 787 residues: Glycine-rich domain-containing protein 2 (787 aa).

In terms of tissue distribution, expressed in leaves, inflorescences, buds, flowers and immature siliques.

Its function is as follows. Involved in development and stress responses, probably through an auxin-dependent mechanism. The protein is Glycine-rich domain-containing protein 2 of Arabidopsis thaliana (Mouse-ear cress).